We begin with the raw amino-acid sequence, 346 residues long: Uroporphyrinogen decarboxylase (346 aa).

Substrate contacts are provided by residues 26–30 (RQAGR), Asp-76, Tyr-153, Ser-208, and His-323.

Belongs to the uroporphyrinogen decarboxylase family. Homodimer.

It localises to the cytoplasm. It carries out the reaction uroporphyrinogen III + 4 H(+) = coproporphyrinogen III + 4 CO2. It functions in the pathway porphyrin-containing compound metabolism; protoporphyrin-IX biosynthesis; coproporphyrinogen-III from 5-aminolevulinate: step 4/4. Functionally, catalyzes the decarboxylation of four acetate groups of uroporphyrinogen-III to yield coproporphyrinogen-III. The sequence is that of Uroporphyrinogen decarboxylase from Prochlorococcus marinus (strain MIT 9301).